The chain runs to 2241 residues: Large tegument protein deneddylase (2241 aa).

A deubiquitination activity region spans residues 1–238 (MKVTQASCHQ…IDLTGVVRES (238 aa)). The Peptidase C76 domain occupies 4-226 (TQASCHQGDI…AARLVSTYRD (223 aa)). Active-site residues include C24, D160, and H162. A disordered region spans residues 239-314 (ADTAATTTTA…STTSKTLATA (76 aa)). Residues 240 to 250 (DTAATTTTAAP) are compositionally biased toward low complexity. The span at 251–268 (SLPPLPDPIVDPGCPPGV) shows a compositional bias: pro residues. Positions 304 to 314 (PSTTSKTLATA) are enriched in low complexity. An interaction with inner tegument protein region spans residues 327 to 331 (SSAVP). A disordered region spans residues 1170-1229 (RSSQQKMEEQLQETRQQMTETSERLDRSLRQDPGSSSVTRVPEKPFKGQELAGRITPPPA). A compositionally biased stretch (basic and acidic residues) spans 1190 to 1199 (TSERLDRSLR).

This sequence belongs to the herpesviridae large tegument protein family. Interacts with host CUL1 and CUL4A; these interactions inhibit the E3 ligase activity of cullins. Interacts with inner tegument protein. Interacts with capsid vertex specific component CVC2. Interacts with the major capsid protein/MCP.

It is found in the virion tegument. The protein resides in the host cytoplasm. It localises to the host nucleus. The enzyme catalyses Thiol-dependent hydrolysis of ester, thioester, amide, peptide and isopeptide bonds formed by the C-terminal Gly of ubiquitin (a 76-residue protein attached to proteins as an intracellular targeting signal).. Its function is as follows. Large tegument protein that plays multiple roles in the viral cycle. During viral entry, remains associated with the capsid while most of the tegument is detached and participates in the capsid transport toward the host nucleus. Plays a role in the routing of the capsid at the nuclear pore complex and subsequent uncoating. Within the host nucleus, acts as a deneddylase and promotes the degradation of nuclear CRLs (cullin-RING ubiquitin ligases) and thereby stabilizes nuclear CRL substrates, while cytoplasmic CRLs remain unaffected. These modifications prevent host cell cycle S-phase progression and create a favorable environment allowing efficient viral genome replication. Participates later in the secondary envelopment of capsids. Indeed, plays a linker role for the association of the outer viral tegument to the capsids together with the inner tegument protein. This chain is Large tegument protein deneddylase (UL48), found in Human cytomegalovirus (strain AD169) (HHV-5).